Reading from the N-terminus, the 224-residue chain is Adenosylcobinamide-GDP ribazoletransferase (224 aa).

The next 4 helical transmembrane spans lie at 21–41, 44–64, 97–117, and 156–176; these read LSFK…AAIP, LLYL…ATGL, GGIF…HSPL, and WPAA…TTAV.

Belongs to the CobS family. Requires Mg(2+) as cofactor.

It is found in the cell membrane. The catalysed reaction is alpha-ribazole + adenosylcob(III)inamide-GDP = adenosylcob(III)alamin + GMP + H(+). The enzyme catalyses alpha-ribazole 5'-phosphate + adenosylcob(III)inamide-GDP = adenosylcob(III)alamin 5'-phosphate + GMP + H(+). It functions in the pathway cofactor biosynthesis; adenosylcobalamin biosynthesis; adenosylcobalamin from cob(II)yrinate a,c-diamide: step 7/7. Functionally, joins adenosylcobinamide-GDP and alpha-ribazole to generate adenosylcobalamin (Ado-cobalamin). Also synthesizes adenosylcobalamin 5'-phosphate from adenosylcobinamide-GDP and alpha-ribazole 5'-phosphate. This Pyrobaculum aerophilum (strain ATCC 51768 / DSM 7523 / JCM 9630 / CIP 104966 / NBRC 100827 / IM2) protein is Adenosylcobinamide-GDP ribazoletransferase.